Reading from the N-terminus, the 302-residue chain is Oxygen-dependent coproporphyrinogen-III oxidase (302 aa).

Ser94 is a binding site for substrate. Residues His98 and His108 each contribute to the a divalent metal cation site. Catalysis depends on His108, which acts as the Proton donor. 110 to 112 (NVR) provides a ligand contact to substrate. A divalent metal cation-binding residues include His147 and His177. Residues 242–277 (YVEFNLVFDRGTLFGLQSGGRAESILMSMPPVANWR) form an important for dimerization region. Residue 260-262 (GGR) coordinates substrate.

It belongs to the aerobic coproporphyrinogen-III oxidase family. As to quaternary structure, homodimer. Requires a divalent metal cation as cofactor.

It is found in the cytoplasm. The catalysed reaction is coproporphyrinogen III + O2 + 2 H(+) = protoporphyrinogen IX + 2 CO2 + 2 H2O. It functions in the pathway porphyrin-containing compound metabolism; protoporphyrin-IX biosynthesis; protoporphyrinogen-IX from coproporphyrinogen-III (O2 route): step 1/1. Functionally, involved in the heme biosynthesis. Catalyzes the aerobic oxidative decarboxylation of propionate groups of rings A and B of coproporphyrinogen-III to yield the vinyl groups in protoporphyrinogen-IX. The protein is Oxygen-dependent coproporphyrinogen-III oxidase of Ralstonia pickettii (strain 12J).